The sequence spans 580 residues: MSGSKQGSEKASITSLIDSEEQGDEATSVSTQNQSPKTQITQTENVEVQNSDLKVTENKPKNTEMKPTDPNTNASTTENTPITTSNAQVSEKSEKTVPAWMREPEEAQNRYDRYVPRVDNRRRGEPRVAEVRQDPRYAKYLRQDQEERRIRRPDDEYEGDHKRRRPEMVTQFDDRRQGTRKNHPGQAGQSESEENGDEQQGDDEEETPGNEEPVEAQPYSRLATSVQSTQHYHTFQSHIANKENKDINSIVRSHYNQRTIQSKMQGSRTKSPIYKLRNFNNAVKYMLLGNHVRKNPNPGSPTVILDMCCGKGGDLNKAEFVGADQYVGIDISDASVKEAFHRYRRNKARFIPRDGGRAGQRDSRKYNFEACFATGDCFQQSIPEILEPNFPGIVNGLFPVDCVSIQFSMHYSFESEERVRTMLNNVSKSLRPGGTFVGTIPSSDFIRDKIVNKDFLPGTNNKFGNELYSVTFDRTPPSDGIFRPPFGNKYDYFLKDAVDNVPEYVVPFEVFRSMCEEVGLTLRYKKNFIEIFNQEIPKYFHKLNRNLVDGMKRADGKYGAEGAEKEAVSFYLGFAFEKLG.

2 stretches are compositionally biased toward polar residues: residues 1-17 (MSGS…TSLI) and 25-53 (EATS…NSDL). The disordered stretch occupies residues 1–222 (MSGSKQGSEK…PVEAQPYSRL (222 aa)). A compositionally biased stretch (basic and acidic residues) spans 54-67 (KVTENKPKNTEMKP). The segment covering 69-90 (DPNTNASTTENTPITTSNAQVS) has biased composition (polar residues). Basic and acidic residues predominate over residues 102–154 (REPEEAQNRYDRYVPRVDNRRRGEPRVAEVRQDPRYAKYLRQDQEERRIRRPD). Acidic residues predominate over residues 191-214 (ESEENGDEQQGDDEEETPGNEEPV). The mRNA cap 0 methyltransferase domain maps to 271–579 (SPIYKLRNFN…FYLGFAFEKL (309 aa)). 280 to 281 (NN) lines the mRNA pocket. S-adenosyl-L-methionine contacts are provided by K284, C308, D330, D376, Q406, and Y411.

It belongs to the class I-like SAM-binding methyltransferase superfamily. mRNA cap 0 methyltransferase family.

It is found in the nucleus. It carries out the reaction a 5'-end (5'-triphosphoguanosine)-ribonucleoside in mRNA + S-adenosyl-L-methionine = a 5'-end (N(7)-methyl 5'-triphosphoguanosine)-ribonucleoside in mRNA + S-adenosyl-L-homocysteine. In terms of biological role, responsible for methylating the 5'-cap structure of mRNAs. This is mRNA cap guanine-N(7) methyltransferase (ABD1) from Meyerozyma guilliermondii (strain ATCC 6260 / CBS 566 / DSM 6381 / JCM 1539 / NBRC 10279 / NRRL Y-324) (Yeast).